Reading from the N-terminus, the 337-residue chain is Phenylalanine--tRNA ligase alpha subunit (337 aa).

E252 contributes to the Mg(2+) binding site.

It belongs to the class-II aminoacyl-tRNA synthetase family. Phe-tRNA synthetase alpha subunit type 1 subfamily. Tetramer of two alpha and two beta subunits. It depends on Mg(2+) as a cofactor.

The protein resides in the cytoplasm. The catalysed reaction is tRNA(Phe) + L-phenylalanine + ATP = L-phenylalanyl-tRNA(Phe) + AMP + diphosphate + H(+). The protein is Phenylalanine--tRNA ligase alpha subunit of Francisella tularensis subsp. holarctica (strain OSU18).